A 1493-amino-acid chain; its full sequence is Pleckstrin homology domain-containing family H member 2 (1493 aa).

Positions 20 to 175 (LESQLMKFRV…LQEVQGKKSS (156 aa)) form a coiled coil. Disordered stretches follow at residues 202 to 230 (SPPQ…DMEE), 245 to 335 (NNRG…SSSI), 363 to 439 (LNSP…LPPP), and 613 to 705 (SSSP…EPLE). Residues 208 to 230 (KSEEMSKISSKEPEFTEGKDMEE) show a composition bias toward basic and acidic residues. 2 stretches are compositionally biased toward polar residues: residues 245–260 (NNRG…CGSE) and 267–281 (TSFA…NSGA). The span at 374 to 388 (LSKKEQDSSSDELNK) shows a compositional bias: basic and acidic residues. Composition is skewed to polar residues over residues 389–409 (KFQS…TPSP), 421–432 (NSLSGKGTQLVP), and 676–698 (STDT…SSDN). PH domains lie at 703–797 (PLEK…NVLR) and 811–919 (KPTM…VAAG). The 156-residue stretch at 955-1110 (HSKEGIISPL…PSRMEILSTL (156 aa)) folds into the MyTH4 domain. Residues 1121 to 1451 (FSIPVHFMNG…SYINNFHQQK (331 aa)) form the FERM domain. The disordered stretch occupies residues 1474–1493 (MMGSQPLLSSSRPTKGPTLL).

As to quaternary structure, self-associates. Interacts with TGFB1I1. Kidney. Reduced expression in patients with focal segmental glomerulosclerosis.

It is found in the cytoplasm. The protein resides in the cytoskeleton. It localises to the cell membrane. Its subcellular location is the cell projection. The protein localises to the lamellipodium. Functionally, in the kidney glomerulus may play a role in linking podocyte foot processes to the glomerular basement membrane. May be involved in stabilization of F-actin by attenuating its depolymerization. Can recruit TGFB1I1 from focal adhesions to podocyte lamellipodia. The chain is Pleckstrin homology domain-containing family H member 2 (PLEKHH2) from Homo sapiens (Human).